The following is a 456-amino-acid chain: UDP-N-acetylglucosamine 1-carboxyvinyltransferase (456 aa).

34-35 (KN) contributes to the phosphoenolpyruvate binding site. Residue R104 participates in UDP-N-acetyl-alpha-D-glucosamine binding. The Proton donor role is filled by C128. C128 carries the 2-(S-cysteinyl)pyruvic acid O-phosphothioketal modification. UDP-N-acetyl-alpha-D-glucosamine is bound by residues D319 and I341.

Belongs to the EPSP synthase family. MurA subfamily.

It localises to the cytoplasm. The catalysed reaction is phosphoenolpyruvate + UDP-N-acetyl-alpha-D-glucosamine = UDP-N-acetyl-3-O-(1-carboxyvinyl)-alpha-D-glucosamine + phosphate. Its pathway is cell wall biogenesis; peptidoglycan biosynthesis. Its function is as follows. Cell wall formation. Adds enolpyruvyl to UDP-N-acetylglucosamine. This is UDP-N-acetylglucosamine 1-carboxyvinyltransferase from Prochlorococcus marinus (strain AS9601).